The chain runs to 322 residues: MLNSFKLSLQYILPKLWLTRLAGWGASKRAGWLTKLVIDLFVKYYKVDMTEAQKPDTASYRTFNDFFVRPLRDDVRPLNTDPNILVMPADGVISQLGRIEEDKILQAKGHNYSLEALLAGNYLMADKFRNGTFVTTYLSPRDYHRVHMPCNGILREMIYVPGDLFSVNYLTAQNVPNLFARNERVICLFDTEFGPMAQILVGATIVGSIETVWAGTITPPREGIIKRWTWPEGEHEGSVALLKGQEMGRFKLGSTVINLFAPGKVNLIASLASLSVTKIGQPLATSTETFVAPEVEPAPLPAEEIKAEHDASPLVDNKKDDT.

Catalysis depends on charge relay system; for autoendoproteolytic cleavage activity residues aspartate 90, histidine 147, and serine 254. Residue serine 254 is the Schiff-base intermediate with substrate; via pyruvic acid; for decarboxylase activity of the active site. Position 254 is a pyruvic acid (Ser); by autocatalysis (serine 254). The segment at 297–322 (PAPLPAEEIKAEHDASPLVDNKKDDT) is disordered. The span at 303–322 (EEIKAEHDASPLVDNKKDDT) shows a compositional bias: basic and acidic residues.

It belongs to the phosphatidylserine decarboxylase family. PSD-B subfamily. Prokaryotic type I sub-subfamily. Heterodimer of a large membrane-associated beta subunit and a small pyruvoyl-containing alpha subunit. Pyruvate is required as a cofactor. Is synthesized initially as an inactive proenzyme. Formation of the active enzyme involves a self-maturation process in which the active site pyruvoyl group is generated from an internal serine residue via an autocatalytic post-translational modification. Two non-identical subunits are generated from the proenzyme in this reaction, and the pyruvate is formed at the N-terminus of the alpha chain, which is derived from the carboxyl end of the proenzyme. The autoendoproteolytic cleavage occurs by a canonical serine protease mechanism, in which the side chain hydroxyl group of the serine supplies its oxygen atom to form the C-terminus of the beta chain, while the remainder of the serine residue undergoes an oxidative deamination to produce ammonia and the pyruvoyl prosthetic group on the alpha chain. During this reaction, the Ser that is part of the protease active site of the proenzyme becomes the pyruvoyl prosthetic group, which constitutes an essential element of the active site of the mature decarboxylase.

The protein localises to the cell membrane. The catalysed reaction is a 1,2-diacyl-sn-glycero-3-phospho-L-serine + H(+) = a 1,2-diacyl-sn-glycero-3-phosphoethanolamine + CO2. It participates in phospholipid metabolism; phosphatidylethanolamine biosynthesis; phosphatidylethanolamine from CDP-diacylglycerol: step 2/2. Its function is as follows. Catalyzes the formation of phosphatidylethanolamine (PtdEtn) from phosphatidylserine (PtdSer). This is Phosphatidylserine decarboxylase proenzyme from Salmonella typhi.